Reading from the N-terminus, the 95-residue chain is Endoribonuclease VapD homolog (95 aa).

Belongs to the VapD ribonuclease family. As to quaternary structure, homodimer.

Functionally, cleaves ssRNA, mostly between U:A. The chain is Endoribonuclease VapD homolog from Helicobacter pylori (strain ATCC 700392 / 26695) (Campylobacter pylori).